The primary structure comprises 87 residues: MSMLSFLLGEKKKTASVAKERLQIILARERVGGNGGGPDYLPALQKELMAVISKYVDIDVNDIKVHLERQENLEVLEVKIELPDASR.

The protein belongs to the MinE family.

Its function is as follows. Prevents the cell division inhibition by proteins MinC and MinD at internal division sites while permitting inhibition at polar sites. This ensures cell division at the proper site by restricting the formation of a division septum at the midpoint of the long axis of the cell. The sequence is that of Cell division topological specificity factor from Delftia acidovorans (strain DSM 14801 / SPH-1).